The chain runs to 216 residues: Probable transaldolase (216 aa).

The active-site Schiff-base intermediate with substrate is Lys83.

The protein belongs to the transaldolase family. Type 3B subfamily.

The protein localises to the cytoplasm. The catalysed reaction is D-sedoheptulose 7-phosphate + D-glyceraldehyde 3-phosphate = D-erythrose 4-phosphate + beta-D-fructose 6-phosphate. It functions in the pathway carbohydrate degradation; pentose phosphate pathway; D-glyceraldehyde 3-phosphate and beta-D-fructose 6-phosphate from D-ribose 5-phosphate and D-xylulose 5-phosphate (non-oxidative stage): step 2/3. Functionally, transaldolase is important for the balance of metabolites in the pentose-phosphate pathway. This is Probable transaldolase from Thermosipho africanus (strain TCF52B).